The primary structure comprises 96 residues: Small ribosomal subunit protein bS6 (96 aa).

The protein belongs to the bacterial ribosomal protein bS6 family.

In terms of biological role, binds together with bS18 to 16S ribosomal RNA. This is Small ribosomal subunit protein bS6 from Streptococcus pneumoniae serotype 2 (strain D39 / NCTC 7466).